The following is a 176-amino-acid chain: Large ribosomal subunit protein uL16 (176 aa).

This sequence belongs to the universal ribosomal protein uL16 family.

In Picrophilus torridus (strain ATCC 700027 / DSM 9790 / JCM 10055 / NBRC 100828 / KAW 2/3), this protein is Large ribosomal subunit protein uL16.